Here is a 328-residue protein sequence, read N- to C-terminus: Phenylalanine--tRNA ligase alpha subunit (328 aa).

Glu245 contacts Mg(2+).

It belongs to the class-II aminoacyl-tRNA synthetase family. Phe-tRNA synthetase alpha subunit type 1 subfamily. As to quaternary structure, tetramer of two alpha and two beta subunits. Mg(2+) serves as cofactor.

The protein resides in the cytoplasm. It catalyses the reaction tRNA(Phe) + L-phenylalanine + ATP = L-phenylalanyl-tRNA(Phe) + AMP + diphosphate + H(+). This is Phenylalanine--tRNA ligase alpha subunit (pheS) from Helicobacter pylori (strain ATCC 700392 / 26695) (Campylobacter pylori).